A 142-amino-acid chain; its full sequence is Putative pre-16S rRNA nuclease (142 aa).

This sequence belongs to the YqgF nuclease family.

The protein localises to the cytoplasm. In terms of biological role, could be a nuclease involved in processing of the 5'-end of pre-16S rRNA. In Lactobacillus helveticus (strain DPC 4571), this protein is Putative pre-16S rRNA nuclease.